The following is a 421-amino-acid chain: Glucose-1-phosphate adenylyltransferase (421 aa).

Alpha-D-glucose 1-phosphate-binding positions include tyrosine 108, glycine 173, 188 to 189 (EK), and serine 206.

Belongs to the bacterial/plant glucose-1-phosphate adenylyltransferase family. Homotetramer.

The enzyme catalyses alpha-D-glucose 1-phosphate + ATP + H(+) = ADP-alpha-D-glucose + diphosphate. Its pathway is glycan biosynthesis; glycogen biosynthesis. Involved in the biosynthesis of ADP-glucose, a building block required for the elongation reactions to produce glycogen. Catalyzes the reaction between ATP and alpha-D-glucose 1-phosphate (G1P) to produce pyrophosphate and ADP-Glc. The chain is Glucose-1-phosphate adenylyltransferase from Mesorhizobium japonicum (strain LMG 29417 / CECT 9101 / MAFF 303099) (Mesorhizobium loti (strain MAFF 303099)).